Reading from the N-terminus, the 456-residue chain is Transcription factor bHLH62 (456 aa).

A compositionally biased stretch (polar residues) spans 159–185; it reads RTNSPFPINNEPPITTNEKMPRVSSSP. Positions 159–254 are disordered; that stretch reads RTNSPFPINN…KTKSIDPYKD (96 aa). Residues 223-254 are compositionally biased toward basic and acidic residues; it reads KEIEEKEDSDPKRCKKSEENGDKTKSIDPYKD. The bHLH domain occupies 264–314; it reads QATDSHSLAERVRREKISERMKLLQDLVPGCNKVTGKALMLDEIINYVQSL.

In terms of assembly, homodimer. Expressed constitutively in roots, leaves, stems, and flowers.

The protein resides in the nucleus. In Arabidopsis thaliana (Mouse-ear cress), this protein is Transcription factor bHLH62 (BHLH62).